Reading from the N-terminus, the 410-residue chain is Lysosome-associated membrane glycoprotein 2 (410 aa).

Residues Met-1–Ala-28 form the signal peptide. Residues Leu-29–Asp-192 are first lumenal domain. Residues Leu-29 to Phe-375 lie on the Lumenal side of the membrane. 2 N-linked (GlcNAc...) (polylactosaminoglycan) asparagine glycosylation sites follow: Asn-32 and Asn-38. A disulfide bridge links Cys-41 with Cys-79. 6 N-linked (GlcNAc...) asparagine glycosylation sites follow: Asn-49, Asn-58, Asn-75, Asn-101, Asn-123, and Asn-179. An intrachain disulfide couples Cys-153 to Cys-189. The segment at Lys-193–Gly-228 is hinge. The O-linked (GalNAc...) serine glycan is linked to Ser-195. Thr-196, Thr-200, Thr-203, and Thr-204 each carry an O-linked (GalNAc...) threonine glycan. Low complexity predominate over residues Pro-199–Thr-213. The disordered stretch occupies residues Pro-199–Gly-221. The O-linked (GalNAc...) serine; partial glycan is linked to Ser-207. A glycan (O-linked (GalNAc...) threonine; partial) is linked at Thr-209. O-linked (GalNAc...) threonine glycosylation is found at Thr-210 and Thr-211. Residue Thr-213 is glycosylated (O-linked (GalNAc...) threonine; partial). N-linked (GlcNAc...) asparagine glycans are attached at residues Asn-229, Asn-242, Asn-257, Asn-275, and Asn-300. Residues Asn-229–Phe-375 are second lumenal domain. Cys-232 and Cys-265 form a disulfide bridge. Asn-307 carries an N-linked (GlcNAc...) (polylactosaminoglycan) asparagine glycan. 2 N-linked (GlcNAc...) asparagine glycosylation sites follow: Asn-317 and Asn-356. Cys-331 and Cys-368 form a disulfide bridge. A helical transmembrane segment spans residues Leu-376–Gly-399. Topologically, residues Leu-400–Phe-410 are cytoplasmic. Residues Lys-401–His-404 form an important for binding and subsequent lysosomal degradation of target proteins region.

It belongs to the LAMP family. As to quaternary structure, monomer. Homodimer. Homotrimer. Forms large homooligomers. Interacts (via its cytoplasmic region) with HSPA8; HSPA8 mediates recruitment of proteins with a KFERQ motif to the surface of the lysosome for chaperone-mediated autophagy. Interacts with HSP90 in the lysosome lumen; this enhances LAMP2 stability. Interacts with MLLT11. Interacts with ABCB9. Interacts with FURIN. Interacts with CT55; this interaction may be important for LAMP2 protein stability. Interacts with TMEM175; inhibiting the proton channel activity of TMEM175. Forms a ternary complex with RAB7A and RUFY4 (via RUN domain); the interaction with RAB7A is mediated by RUFY4 (via RUN and coiled coil domains). (Microbial infection) Interacts with mumps virus protein F; this interaction promotes protein F cleavage by FURIN. O- and N-glycosylated; some of the 16 N-linked glycans are polylactosaminoglycans. In terms of tissue distribution, isoform LAMP-2A is highly expressed in placenta, lung and liver, less in kidney and pancreas, low in brain and skeletal muscle. Isoform LAMP-2B is detected in spleen, thymus, prostate, testis, small intestine, colon, skeletal muscle, brain, placenta, lung, kidney, ovary and pancreas and liver. Isoform LAMP-2C is detected in small intestine, colon, heart, brain, skeletal muscle, and at lower levels in kidney and placenta.

Its subcellular location is the lysosome membrane. The protein resides in the endosome membrane. The protein localises to the cell membrane. It localises to the cytoplasmic vesicle. It is found in the autophagosome membrane. Lysosomal membrane glycoprotein which plays an important role in lysosome biogenesis, lysosomal pH regulation and autophagy. Acts as an important regulator of lysosomal lumen pH regulation by acting as a direct inhibitor of the proton channel TMEM175, facilitating lysosomal acidification for optimal hydrolase activity. Plays an important role in chaperone-mediated autophagy, a process that mediates lysosomal degradation of proteins in response to various stresses and as part of the normal turnover of proteins with a long biological half-live. Functions by binding target proteins, such as GAPDH, NLRP3 and MLLT11, and targeting them for lysosomal degradation. In the chaperone-mediated autophagy, acts downstream of chaperones, such as HSPA8/HSC70, which recognize and bind substrate proteins and mediate their recruitment to lysosomes, where target proteins bind LAMP2. Plays a role in lysosomal protein degradation in response to starvation. Required for the fusion of autophagosomes with lysosomes during autophagy. Cells that lack LAMP2 express normal levels of VAMP8, but fail to accumulate STX17 on autophagosomes, which is the most likely explanation for the lack of fusion between autophagosomes and lysosomes. Required for normal degradation of the contents of autophagosomes. Required for efficient MHC class II-mediated presentation of exogenous antigens via its function in lysosomal protein degradation; antigenic peptides generated by proteases in the endosomal/lysosomal compartment are captured by nascent MHC II subunits. Is not required for efficient MHC class II-mediated presentation of endogenous antigens. In terms of biological role, modulates chaperone-mediated autophagy. Decreases presentation of endogenous antigens by MHCII. Does not play a role in the presentation of exogenous and membrane-derived antigens by MHCII. Its function is as follows. (Microbial infection) Supports the FURIN-mediated cleavage of mumps virus fusion protein F by interacting with both FURIN and the unprocessed form but not the processed form of the viral protein F. The protein is Lysosome-associated membrane glycoprotein 2 (LAMP2) of Homo sapiens (Human).